The following is a 632-amino-acid chain: Chaperone protein HtpG (632 aa).

The a; substrate-binding stretch occupies residues 1–339; it reads MAHETMSFQA…SADLPLNVSR (339 aa). The b stretch occupies residues 340–559; the sequence is EILQESRDVK…DNDMSGYLQR (220 aa). A c region spans residues 560–632; that stretch reads MLKAAGQNAP…TNALLLSRAA (73 aa).

Belongs to the heat shock protein 90 family. Homodimer.

It is found in the cytoplasm. Functionally, molecular chaperone. Has ATPase activity. The protein is Chaperone protein HtpG of Burkholderia cenocepacia (strain HI2424).